A 450-amino-acid polypeptide reads, in one-letter code: Membrane-bound lytic murein transglycosylase F 2 (450 aa).

The N-terminal stretch at 1-20 is a signal peptide; sequence MRTWIAILAVVLVLLLNACT. Positions 21 to 261 are non-LT domain; the sequence is DGPEDGPRLE…AMENRYYTYV (241 aa). The interval 262 to 450 is LT domain; the sequence is GEFDFVDLRA…YRDVIRQAFE (189 aa). Glu-308 is a catalytic residue.

It in the N-terminal section; belongs to the bacterial solute-binding protein 3 family. The protein in the C-terminal section; belongs to the transglycosylase Slt family.

The protein resides in the cell outer membrane. The catalysed reaction is Exolytic cleavage of the (1-&gt;4)-beta-glycosidic linkage between N-acetylmuramic acid (MurNAc) and N-acetylglucosamine (GlcNAc) residues in peptidoglycan, from either the reducing or the non-reducing ends of the peptidoglycan chains, with concomitant formation of a 1,6-anhydrobond in the MurNAc residue.. Murein-degrading enzyme that degrades murein glycan strands and insoluble, high-molecular weight murein sacculi, with the concomitant formation of a 1,6-anhydromuramoyl product. Lytic transglycosylases (LTs) play an integral role in the metabolism of the peptidoglycan (PG) sacculus. Their lytic action creates space within the PG sacculus to allow for its expansion as well as for the insertion of various structures such as secretion systems and flagella. In Alkalilimnicola ehrlichii (strain ATCC BAA-1101 / DSM 17681 / MLHE-1), this protein is Membrane-bound lytic murein transglycosylase F 2.